Consider the following 103-residue polypeptide: MDIQYLMRQAKKLEKAMADAKEKLAEIAVEAESGGGLVKVAMNGKCEITRLTVDPKAVDPNDKALLEDLVTAAVNAAVEKARTAADESMSKATGGIKIPGIAG.

Belongs to the YbaB/EbfC family. As to quaternary structure, homodimer.

It localises to the cytoplasm. It is found in the nucleoid. Functionally, binds to DNA and alters its conformation. May be involved in regulation of gene expression, nucleoid organization and DNA protection. The chain is Nucleoid-associated protein A2cp1_3777 from Anaeromyxobacter dehalogenans (strain 2CP-1 / ATCC BAA-258).